Consider the following 310-residue polypeptide: Cysteine synthase (310 aa).

K46 is modified (N6-(pyridoxal phosphate)lysine). Pyridoxal 5'-phosphate is bound by residues N76, 180–184 (GTGGT), and S268.

Belongs to the cysteine synthase/cystathionine beta-synthase family. Homodimer. Requires pyridoxal 5'-phosphate as cofactor.

It catalyses the reaction O-acetyl-L-serine + hydrogen sulfide = L-cysteine + acetate. Its pathway is amino-acid biosynthesis; L-cysteine biosynthesis; L-cysteine from L-serine: step 2/2. The sequence is that of Cysteine synthase (cysK) from Staphylococcus epidermidis (strain ATCC 35984 / DSM 28319 / BCRC 17069 / CCUG 31568 / BM 3577 / RP62A).